Here is a 299-residue protein sequence, read N- to C-terminus: MTTANQPICPSPAKWPSPAKLNLFLYITGQRADGYHQLQTLFQFLDYGDQLTIEPRDDNQIRLLTPIAGVENEQNLIVRAAKMLQKHPGNTPVPRGADISIDKCLPMGGGLGGGSSNAATVLVALNLLWQCGLTDEQLADLGLTLGADVPVFVRGHAAFAEGIGEKLQPAEPVEKWYLVIHPGVNIPTPIIFSDPELKRNTPIRPLAALLSTPYANDCEPIARKRFREVEQALSWLLEYAPSRLTGTGACVFAEFDTESSARQVLSIAPEWLHGFVARGVNVSPLHRVRSGKIESSERR.

K20 is a catalytic residue. 106–116 (PMGGGLGGGSS) contributes to the ATP binding site. Residue D148 is part of the active site.

It belongs to the GHMP kinase family. IspE subfamily. In terms of assembly, homodimer.

The enzyme catalyses 4-CDP-2-C-methyl-D-erythritol + ATP = 4-CDP-2-C-methyl-D-erythritol 2-phosphate + ADP + H(+). The protein operates within isoprenoid biosynthesis; isopentenyl diphosphate biosynthesis via DXP pathway; isopentenyl diphosphate from 1-deoxy-D-xylulose 5-phosphate: step 3/6. Its function is as follows. Catalyzes the phosphorylation of the position 2 hydroxy group of 4-diphosphocytidyl-2C-methyl-D-erythritol. This is 4-diphosphocytidyl-2-C-methyl-D-erythritol kinase from Yersinia pseudotuberculosis serotype O:1b (strain IP 31758).